The following is a 391-amino-acid chain: UPF0229 protein BCA_0588 (391 aa).

Over residues 1-16 the composition is skewed to polar residues; that stretch reads MGEENQPNYTISQENW. 2 disordered regions span residues 1 to 31 and 80 to 117; these read MGEE…RHQE and HVGQ…GDAA. The span at 21–31 shows a compositional bias: basic and acidic residues; it reads KGYDDQQRHQE. Positions 98 to 115 are enriched in gly residues; it reads GSGGQKQKGPGKGQGAGD.

It belongs to the UPF0229 family.

This Bacillus cereus (strain 03BB102) protein is UPF0229 protein BCA_0588.